A 174-amino-acid chain; its full sequence is Keratin-associated protein 1-5 (174 aa).

The segment at 3 to 172 (CCQTSFCGYP…CCRPVCCCEP (170 aa)) is 15 X 5 AA repeats of C-C-[QEPVRC]-[TPIVLE]-[SRHVP].

This sequence belongs to the KRTAP type 1 family. Interacts with hair keratins. As to expression, expressed in the middle/upper portions of the hair cortex, in the region termed the keratogenous zone.

In terms of biological role, in the hair cortex, hair keratin intermediate filaments are embedded in an interfilamentous matrix, consisting of hair keratin-associated proteins (KRTAP), which are essential for the formation of a rigid and resistant hair shaft through their extensive disulfide bond cross-linking with abundant cysteine residues of hair keratins. The matrix proteins include the high-sulfur and high-glycine-tyrosine keratins. This chain is Keratin-associated protein 1-5 (KRTAP1-5), found in Homo sapiens (Human).